Here is a 118-residue protein sequence, read N- to C-terminus: uncharacterized protein (118 aa).

The cysteines at positions 11 and 14 are disulfide-linked.

It belongs to the ArsC family.

This is an uncharacterized protein from Bacillus subtilis (strain 168).